A 265-amino-acid polypeptide reads, in one-letter code: Protein N-terminal and lysine N-methyltransferase EFM7 (265 aa).

A disordered region spans residues 1–25 (MSSDHEEDSLYGATELFGEPDGFYE). S-adenosyl-L-methionine-binding positions include tryptophan 67, 93 to 95 (GAA), aspartate 115, tryptophan 152, and serine 176.

Belongs to the class I-like SAM-binding methyltransferase superfamily. EFM7 family.

The protein resides in the cytoplasm. In terms of biological role, S-adenosyl-L-methionine-dependent protein methyltransferase that trimethylates the N-terminal glycine 'Gly-2' of elongation factor 1-alpha, before also catalyzing the mono- and dimethylation of 'Lys-3'. The chain is Protein N-terminal and lysine N-methyltransferase EFM7 from Eremothecium gossypii (strain ATCC 10895 / CBS 109.51 / FGSC 9923 / NRRL Y-1056) (Yeast).